Reading from the N-terminus, the 498-residue chain is Putative F-box/FBD/LRR-repeat protein At4g03220 (498 aa).

Positions 23 to 71 (VDRISNLPDSLNHQILLLLPLKSAAQASLLSKRWRSLFLSLPDLDFTSI) constitute an F-box domain. 3 LRR repeats span residues 148-172 (SQNLRALTLKSANLGFRLPPSSSAR), 175-200 (FQKLTSLSLSRVILHNQPCLSDFFTD), and 235-259 (SLQLEGLEVSGNKLQKLKVESCFYS). An FBD domain is found at 416–466 (YWESQAYELESFLNHLEFVEIHGFVECENEMSLAIFLLRHGKALIKMTLRS).

The sequence is that of Putative F-box/FBD/LRR-repeat protein At4g03220 from Arabidopsis thaliana (Mouse-ear cress).